The sequence spans 261 residues: U11/U12 small nuclear ribonucleoprotein 31 kDa protein (261 aa).

A disordered region spans residues 18–51 (YYRYSSVAAPPPSNPKHQPSSSAKSSAPGGGSGG). In terms of domain architecture, RRM spans 57–135 (STLYVSNLDF…RKLTVSIAAD (79 aa)). The CCHC-type zinc-finger motif lies at 153-169 (RCYECGDEGHLSYECPK). A disordered region spans residues 165–261 (YECPKNQLGP…YFSDESDDED (97 aa)). The span at 226–235 (AGERLRKREA) shows a compositional bias: basic and acidic residues.

In terms of assembly, component of the U11/U12 snRNPs that are part of the U12-type spliceosome. Ubiquitous. Abundantly expressed in the shoot apical neristem.

Its subcellular location is the nucleus. In terms of biological role, RNA chaperone required for proper U12 intron splicing and for normal growth and development of plants. Mainly responsible for meristem activity. Plays a role in regulating cell division. The sequence is that of U11/U12 small nuclear ribonucleoprotein 31 kDa protein (SNRNP31) from Arabidopsis thaliana (Mouse-ear cress).